Here is a 155-residue protein sequence, read N- to C-terminus: SsrA-binding protein (155 aa).

A compositionally biased stretch (basic and acidic residues) spans 123–142 (DLHDKRETEKKRDWEREKGQ). Positions 123–155 (DLHDKRETEKKRDWEREKGQLMRHKISSPRKDT) are disordered. The segment covering 143–155 (LMRHKISSPRKDT) has biased composition (basic residues).

This sequence belongs to the SmpB family.

The protein localises to the cytoplasm. In terms of biological role, required for rescue of stalled ribosomes mediated by trans-translation. Binds to transfer-messenger RNA (tmRNA), required for stable association of tmRNA with ribosomes. tmRNA and SmpB together mimic tRNA shape, replacing the anticodon stem-loop with SmpB. tmRNA is encoded by the ssrA gene; the 2 termini fold to resemble tRNA(Ala) and it encodes a 'tag peptide', a short internal open reading frame. During trans-translation Ala-aminoacylated tmRNA acts like a tRNA, entering the A-site of stalled ribosomes, displacing the stalled mRNA. The ribosome then switches to translate the ORF on the tmRNA; the nascent peptide is terminated with the 'tag peptide' encoded by the tmRNA and targeted for degradation. The ribosome is freed to recommence translation, which seems to be the essential function of trans-translation. The protein is SsrA-binding protein of Methylibium petroleiphilum (strain ATCC BAA-1232 / LMG 22953 / PM1).